Reading from the N-terminus, the 878-residue chain is von Willebrand factor A domain-containing protein DDB_G0267758 (878 aa).

The 134-residue stretch at 36 to 169 (GLFLTENNKK…TVKITLTITS (134 aa)) folds into the VIT domain. Positions 316–496 (EFIFLIDCSG…ISLKPMFSNI (181 aa)) constitute a VWFA domain. The span at 595–623 (SSSSSSSSSSSSSSSSSSSSSSSSSSSSS) shows a compositional bias: low complexity. Disordered stretches follow at residues 595–638 (SSSS…HRLS) and 752–774 (SVKK…SKTK). A compositionally biased stretch (polar residues) spans 624–635 (TTTATTNQNQIH).

This chain is von Willebrand factor A domain-containing protein DDB_G0267758, found in Dictyostelium discoideum (Social amoeba).